Consider the following 710-residue polypeptide: TRP-like ion channel pkd2 (710 aa).

The signal sequence occupies residues 1-23; it reads MRLWRSPLLLLVVVVELFSWADA. 9 helical membrane passes run 173-193, 197-217, 322-342, 376-396, 404-424, 466-486, 492-512, 525-545, and 555-575; these read WVMC…SPVL, ALWE…IQAL, FFAT…LVAM, FFYR…MWEI, LAFL…YAFV, FFYF…FIGF, KVQG…MVIL, IGVA…CQAF, and IGII…LGIF. Phosphoserine is present on residues Ser-599 and Ser-632. Positions 689–710 are disordered; it reads RISENNNNAERRRKPLPNNAFR.

The protein belongs to the transient receptor potential (TRP) ion channel family. In terms of assembly, interacts with rho1.

Its subcellular location is the cell membrane. It is found in the golgi apparatus membrane. Functionally, acts as a key signaling component in the regulation of cell shape and cell wall synthesis through interaction with GTPase Rho1. The chain is TRP-like ion channel pkd2 (pkd2) from Schizosaccharomyces pombe (strain 972 / ATCC 24843) (Fission yeast).